The following is a 280-amino-acid chain: Dual adapter for phosphotyrosine and 3-phosphotyrosine and 3-phosphoinositide (280 aa).

The 95-residue stretch at 35-129 folds into the SH2 domain; sequence WYHGNLTRHA…GTLMVLKHPY (95 aa). Y139 is modified (phosphotyrosine). S141 is subject to Phosphoserine. In terms of domain architecture, PH spans 164-259; the sequence is LGTKEGYLTK…WIKILRWKLS (96 aa).

In terms of assembly, interacts with PtdIns(3,4,5)P3 and PLCG2. Phosphorylated on tyrosine residues.

It localises to the cytoplasm. It is found in the membrane. Functionally, may act as a B-cell-associated adapter that regulates B-cell antigen receptor (BCR)-signaling downstream of PI3K. In Mus musculus (Mouse), this protein is Dual adapter for phosphotyrosine and 3-phosphotyrosine and 3-phosphoinositide (Dapp1).